Here is a 442-residue protein sequence, read N- to C-terminus: Galactose/N-acetylgalactosamine-binding lectin CEL-III (442 aa).

A propeptide spans 1–10 (MVSLVPCGFA) (removed in mature form). Q11 bears the Pyrrolidone carboxylic acid mark. The tract at residues 11–304 (QVLCTNPLDI…DWEVPTATWN (294 aa)) is has hemagglutinating activity towards rabbit erythrocytes, but no hemolytic activity towards them. Disulfide bonds link C14-C59, C31-C48, and C72-C88. D-galactose is bound by residues D19 and 33–36 (DIVG). 2 Ricin B-type lectin domains span residues 28–102 (SKQC…RWRL) and 115–245 (EQVA…WSRP). Positions 33, 34, and 36 each coordinate Ca(2+). Positions 42 and 43 each coordinate Mg(2+). D49 contacts D-galactose. A Ca(2+)-binding site is contributed by D53. Residues N82 and V83 each coordinate Mg(2+). D-galactose is bound by residues V117 and 131–134 (DVEG). C129 and C146 are joined by a disulfide. Residues D131, V132, and G134 each contribute to the Ca(2+) site. I141 lines the Mg(2+) pocket. Residue 144-147 (YDCQ) coordinates D-galactose. Residues D151, D178, V179, and G181 each contribute to the Ca(2+) site. A disulfide bridge connects residues C176 and C193. Residue 178 to 181 (DVEG) coordinates D-galactose. Positions 187 and 188 each coordinate Mg(2+). 191–194 (YSCE) is a binding site for D-galactose. Positions 198, 219, 220, and 222 each coordinate Ca(2+). C217 and C234 are oxidised to a cystine. 219 to 222 (DVEG) is a binding site for D-galactose. Residues N228 and V229 each contribute to the Mg(2+) site. Position 232 to 235 (232 to 235 (YRCD)) interacts with D-galactose. D239 is a Ca(2+) binding site. Intrachain disulfides connect C249/C254 and C264/C281. The 33-residue stretch at 261-293 (SNKCLDVSGDQGTGDVGTWQCDGLPDQRFKWVF) folds into the Ricin B-type lectin 3 domain. D266, V267, and G269 together coordinate Ca(2+). Residue 266 to 269 (DVSG) coordinates D-galactose. Mg(2+) is bound by residues D275 and V276. Residues 279–282 (WQCD) and D286 contribute to the D-galactose site. D286 contributes to the Ca(2+) binding site. Residues 294–442 (DDWEVPTATW…NEDCTFCTDI (149 aa)) form a has a strong tendency to self-associate leading to formation of oligomers region. 4 cysteine pairs are disulfide-bonded: C308–C390, C377–C416, C425–C439, and C431–C436.

Oligomerizes in the human and rabbit erythrocyte membranes. Oligomerization is induced by binding of beta-1,4-linked disaccharide ligands such as lactose, lactulose, N-acetyllactosamine and phenyl-beta-D-galactoside, but only a little by N-acetylgalactosamine and galactose, and not at all by melibiose in aqueous solution in the presence of high salt concentration and pH 10. Forms heptamers that assemble into larger 21mer oligomers, which may be inserted as a transmembrane pore to the erythrocyte membrane. Ca(2+) is required as a cofactor. Mg(2+) serves as cofactor. As to expression, expressed in body fluid (at protein level).

The protein localises to the secreted. With respect to regulation, ca(2+) is required for hemolytic activity and the activity increases with increasing calcium concentration. Hemolytic activity is inhibited by N-acetylgalactosamine (GalNAc), lactose, lactulose, galactosamine, dextran with molecular masses greater than 4 kDa, to a lesser extent by inulin and only slightly by sucrose and melezitose, but not by glucose or mannose. The activity is abolished in the presence of 10 mM EDTA. Lactose-binding increases with increasing calcium concentration, but calcium has no effect on hemagglutinating activity. Cytotoxic effect on Madin-Darby canine kidney (MDCK) cell line is strongly inhibited by galactose, lactose and N-acetylgalactosamine (GalNAc), but not by raffinose, N-acetylglucosamine (GlcNAc), glucose, mannose, ribose or sucrose. Pore formation in artificial lactosyl ceramide (LacCer) or globotetraosylceramide (Gb4Cer) containing liposomes is strongly inhibited by lactose. In terms of biological role, galactose/N-acetylgalactosamine (Gal/GalNAc)-binding lectin with hemolytic activity. Favors saccharides that have a beta-1,4 linkage at the non-reducing end rather than saccharides having alpha-1,6 or alpha-1,4 linkages. Binds lactose, lactulose, GalNAc, galactosamine, methyl alpha-galactopyranoside, methyl beta-galactopyranoside, N-acetyllactosamine, p-nitrophenyl beta-D-galactopyranoside (pNP-Gal), p-nitrophenyl N-acetyl-beta-D-galactosaminide (pNP-GalNAc), asialofetuin, and human erythrocyte membrane lipids lactosyl ceramide (LacCer) and globoside globotetraosylceramide (Gb4Cer). Binds moderately to galactose, melibiose, raffinose, fucose, methyl alpha-galactoside and methyl beta-galactoside. Binds weakly to glucose, mannose and N-acetylglucosamine (GlcNAc). Has hemolytic activity towards human (A, B and O-type), rabbit and rat erythrocytes, but not towards mouse, chicken or horse erythrocytes. Forms ion-permeable transmembrane pores in the erythrocyte membrane as well as in artificial liposomes containing human erythrocyte membrane lipids LacCer, Gb4Cer and galactosyl ceramide (GalCer) leading to destruction of the membrane. Has hemagglutinating activity towards rabbit, human and rat erythrocytes, and at relatively high concentrations towards chicken and horse erythrocytes, but not towards mouse erythrocytes. Has dose-dependent cytotoxic effect on Madin-Darby canine kidney (MDCK), African green monkey kidney (Vero) and human epithelia carcinoma (HeLa) cell lines, but Chinese hamster ovary (CHO), rat sarcoma (XC) and potoroo rat kangaroo kidney (PtK1) cells are highly resistant to the cytotoxic effect of this protein. Impairs malaria parasite development in malaria parasite infected transgenic A.stephensi mosquitoes expressing this protein specifically in their midguts. Binds to ookinetes and leads to strong dose-dependent inhibition of ookinete formation in vitro. Leads to severely impaired oocyst formation and significantly reduced sporozoite production of rodent malaria parasite P.berghei in the salivary glands of the transgenic mosquitoes. The parasite transmission to uninfected mice (vectorial competence) of these mosquitoes is significantly impaired. Also leads to severely impaired oocyst formation of human malaria parasite P.falciparum in transgenic mosquitoes fed on mature P.falciparum gametocyte cultures. May be involved in defense mechanisms acting as a toxic protein to foreign microorganisms. May act in defense against predators. This is Galactose/N-acetylgalactosamine-binding lectin CEL-III from Pseudocnus echinatus (Sea cucumber).